Reading from the N-terminus, the 290-residue chain is Mitochondrial dicarboxylate carrier (290 aa).

Solcar repeat units lie at residues 6-90 (TKRL…VKKQ), 101-188 (QKAL…IKQT), and 197-281 (DNLQ…LRLK). A run of 3 helical transmembrane segments spans residues 12–32 (WYFGGVAGAMAACCTHPLDLL), 65–84 (GVSASVLRQLTYSTTRFGIY), and 103–123 (ALLAGFAGACGGMVGTPGDLV). N6-acetyllysine is present on Lys-159. Transmembrane regions (helical) follow at residues 163-182 (GATMATSRAILMTIGQLSFY), 203-223 (FASSISAASVATVMTQPLDVM), and 256-276 (GFIPAWARLAPHTVLTFIFFE).

It belongs to the mitochondrial carrier (TC 2.A.29) family.

The protein localises to the mitochondrion inner membrane. It carries out the reaction (S)-malate(in) + phosphate(out) = (S)-malate(out) + phosphate(in). The enzyme catalyses malonate(out) + (S)-malate(in) = malonate(in) + (S)-malate(out). It catalyses the reaction (S)-malate(in) + succinate(out) = (S)-malate(out) + succinate(in). The catalysed reaction is (S)-malate(in) + sulfate(out) = (S)-malate(out) + sulfate(in). It carries out the reaction 2 thiosulfate(out) + (S)-malate(in) = 2 thiosulfate(in) + (S)-malate(out). The enzyme catalyses malonate(out) + phosphate(in) = malonate(in) + phosphate(out). It catalyses the reaction succinate(out) + phosphate(in) = succinate(in) + phosphate(out). The catalysed reaction is sulfate(out) + phosphate(in) = sulfate(in) + phosphate(out). It carries out the reaction 2 thiosulfate(out) + phosphate(in) = 2 thiosulfate(in) + phosphate(out). The enzyme catalyses malonate(out) + succinate(in) = malonate(in) + succinate(out). In terms of biological role, catalyzes the electroneutral exchange or flux of physiologically important metabolites such as dicarboxylates (malonate, malate, succinate), inorganic sulfur-containing anions, and phosphate, across mitochondrial inner membrane. Plays an important role in gluconeogenesis, fatty acid metabolism, urea synthesis, and sulfur metabolism, by supplying the substrates for the different metabolic processes. The protein is Mitochondrial dicarboxylate carrier of Caenorhabditis elegans.